The following is a 200-amino-acid chain: Glycerol-3-phosphate acyltransferase (200 aa).

Transmembrane regions (helical) follow at residues 2 to 22, 51 to 71, 84 to 104, 114 to 134, and 158 to 178; these read FNIPAVAVSYLIGSLSFAVIV, KAAALTLLGDAAKGLVAVLLA, AIAAVALAALVGHMWPVFFGF, LGVLLALSPATALVCALIWLV, and LFFMPHTSWIFATLAIAILVL.

It belongs to the PlsY family. Probably interacts with PlsX.

Its subcellular location is the cell inner membrane. The enzyme catalyses an acyl phosphate + sn-glycerol 3-phosphate = a 1-acyl-sn-glycero-3-phosphate + phosphate. It functions in the pathway lipid metabolism; phospholipid metabolism. Its function is as follows. Catalyzes the transfer of an acyl group from acyl-phosphate (acyl-PO(4)) to glycerol-3-phosphate (G3P) to form lysophosphatidic acid (LPA). This enzyme utilizes acyl-phosphate as fatty acyl donor, but not acyl-CoA or acyl-ACP. This chain is Glycerol-3-phosphate acyltransferase, found in Neisseria gonorrhoeae (strain ATCC 700825 / FA 1090).